The chain runs to 125 residues: Multifunctional methyltransferase subunit TRM112-like protein (125 aa).

Positions 2–119 constitute a TRM112 domain; that stretch reads RLLTHNLLSS…SRGIPNMLLS (118 aa). Position 119 is a phosphoserine (S119).

This sequence belongs to the TRM112 family. Part of the heterodimeric BUD23-TRM112 methyltransferase complex; this heterodimerization is necessary for the metabolic stability and activity of the catalytic subunit BUD23. Part of the heterodimeric N6AMT1-TRM112 methyltransferase complex; this heterodimerization is necessary for S-adenosyl-L-methionine-binding to N6AMT1/HEMK2. Part of the heterodimeric ALKBH8-TRM112 methyltransferase complex. Part of the heterodimeric METTL5-TRM112 methyltransferase complex; this heterodimerization is necessary for the stability of the catalytic subunit METTL5. Part of the heterodimeric THUMPD3-TRM112 methyltransferase complex; this complex forms an active tRNA methyltransferase, where TRMT112 acts as an activator of the catalytic subunit THUMPD3. Part of the heterodimeric THUMPD2-TRM112 methyltransferase complex; this complex forms an active tRNA methyltransferase, where TRMT112 acts as an activator of the catalytic subunit THUMPD2. Part of the heterodimeric TRMT11-TRM112 methyltransferase complex; this complex forms an active tRNA methyltransferase, where TRMT112 acts as an activator of the catalytic subunit TRMT11.

The protein resides in the nucleus. The protein localises to the nucleoplasm. Its subcellular location is the cytoplasm. It localises to the perinuclear region. Acts as an activator of both rRNA/tRNA and protein methyltransferases. Together with methyltransferase BUD23, methylates the N(7) position of a guanine in 18S rRNA. The heterodimer with HEMK2/N6AMT1 catalyzes N5-methylation of ETF1 on 'Gln-185', using S-adenosyl L-methionine as methyl donor. The heterodimer with ALKBH8 catalyzes the methylation of 5-carboxymethyl uridine to 5-methylcarboxymethyl uridine at the wobble position of the anticodon loop in target tRNA species. Together with methyltransferase THUMPD3, catalyzes the formation of N(2)-methylguanosine at position 6 in a broad range of tRNA substrates and at position 7 of tRNA(Trp). Involved in the pre-rRNA processing steps leading to small-subunit rRNA production. Together with methyltransferase METTL5, specifically methylates the 6th position of adenine in position 1832 of 18S rRNA. The sequence is that of Multifunctional methyltransferase subunit TRM112-like protein (TRMT112) from Bos taurus (Bovine).